Reading from the N-terminus, the 134-residue chain is Protein TraK (134 aa).

The disordered stretch occupies residues 74–134 (HIKAKPADVP…NPTPDKKDLL (61 aa)). The span at 83-92 (PAPQAKAAEP) shows a compositional bias: low complexity. A compositionally biased stretch (basic and acidic residues) spans 99–112 (PEPRRPKQGGKAEK).

This Escherichia coli protein is Protein TraK (traK).